Consider the following 528-residue polypeptide: GTPase Obg (528 aa).

The Obg domain maps to 2–159 (ASFVDRVVLH…SDIVLELKSI (158 aa)). Residues 160 to 343 (ADIALVGFPS…LGFAMAEIVQ (184 aa)) enclose the OBG-type G domain. GTP is bound by residues 166-173 (GFPSAGKS), 191-195 (FTTLI), 212-215 (DVPG), 295-298 (NKVD), and 324-326 (SAT). Residues Ser-173 and Thr-193 each coordinate Mg(2+). Positions 363–447 (PRAVNESGFK…DDGVVFDWEP (85 aa)) constitute an OCT domain. The segment at 471–490 (DRPTRSQKRDEQIERREAKA) is disordered.

This sequence belongs to the TRAFAC class OBG-HflX-like GTPase superfamily. OBG GTPase family. Monomer. Mg(2+) is required as a cofactor.

It localises to the cytoplasm. Functionally, an essential GTPase which binds GTP, GDP and possibly (p)ppGpp with moderate affinity, with high nucleotide exchange rates and a fairly low GTP hydrolysis rate. Plays a role in control of the cell cycle, stress response, ribosome biogenesis and in those bacteria that undergo differentiation, in morphogenesis control. This is GTPase Obg from Paenarthrobacter aurescens (strain TC1).